Here is a 503-residue protein sequence, read N- to C-terminus: Maturase K (503 aa).

The protein belongs to the intron maturase 2 family. MatK subfamily.

It localises to the plastid. It is found in the chloroplast. Its function is as follows. Usually encoded in the trnK tRNA gene intron. Probably assists in splicing its own and other chloroplast group II introns. The sequence is that of Maturase K from Panax quinquefolius (American ginseng).